The following is a 173-amino-acid chain: RNA pyrophosphohydrolase (173 aa).

Residues 6–149 (GYRPNVGIIL…KRHVYRRALR (144 aa)) form the Nudix hydrolase domain. Residues 38 to 59 (GGIRRDESPLDAMYRELAEETG) carry the Nudix box motif.

It belongs to the Nudix hydrolase family. RppH subfamily. A divalent metal cation is required as a cofactor.

Its function is as follows. Accelerates the degradation of transcripts by removing pyrophosphate from the 5'-end of triphosphorylated RNA, leading to a more labile monophosphorylated state that can stimulate subsequent ribonuclease cleavage. The protein is RNA pyrophosphohydrolase of Thioalkalivibrio sulfidiphilus (strain HL-EbGR7).